Reading from the N-terminus, the 153-residue chain is SsrA-binding protein (153 aa).

The disordered stretch occupies residues 132–153 (REKDWLRERERVMKHDTRRRSD).

Belongs to the SmpB family.

It localises to the cytoplasm. Functionally, required for rescue of stalled ribosomes mediated by trans-translation. Binds to transfer-messenger RNA (tmRNA), required for stable association of tmRNA with ribosomes. tmRNA and SmpB together mimic tRNA shape, replacing the anticodon stem-loop with SmpB. tmRNA is encoded by the ssrA gene; the 2 termini fold to resemble tRNA(Ala) and it encodes a 'tag peptide', a short internal open reading frame. During trans-translation Ala-aminoacylated tmRNA acts like a tRNA, entering the A-site of stalled ribosomes, displacing the stalled mRNA. The ribosome then switches to translate the ORF on the tmRNA; the nascent peptide is terminated with the 'tag peptide' encoded by the tmRNA and targeted for degradation. The ribosome is freed to recommence translation, which seems to be the essential function of trans-translation. This chain is SsrA-binding protein, found in Bordetella avium (strain 197N).